A 229-amino-acid chain; its full sequence is MAAFGIKSKIFQIMEMTILFLFAISIDRYCFAADEDMLQDVCVADLHSKVKVNGFPCKTNFTAADFSSFAISKPGATNNKFGSKVTTANVEQVPGLNTLGVSLARIDYAPGGINPPHTHPRASEMVFVMEGELDVGFITTANVLVSKQITKGEVFVFPRGLVHFQKNNGKIPAAVVSAFNSQLPGTQSIPITLFGASPTVPDDVLAQTFQINIEDVQQIKSKFAPAKKF.

The signal sequence occupies residues 1–32 (MAAFGIKSKIFQIMEMTILFLFAISIDRYCFA). Cysteine 42 and cysteine 57 are joined by a disulfide. N-linked (GlcNAc...) asparagine glycosylation occurs at asparagine 60. In terms of domain architecture, Cupin type-1 spans 69-217 (FAISKPGATN…TFQINIEDVQ (149 aa)). The Mn(2+) site is built by histidine 117, histidine 119, glutamate 124, and histidine 163.

The protein belongs to the germin family. In terms of assembly, monomer. In the absence of manganese, it forms tetrameric and pentameric forms which show superoxide dismutase activity. Mn(2+) serves as cofactor. In terms of processing, glycosylated.

The protein resides in the secreted. The protein localises to the extracellular space. It localises to the apoplast. The enzyme catalyses 2 superoxide + 2 H(+) = H2O2 + O2. Its function is as follows. May interact with bacterial adhesins thereby protecting the reproductive tissues from microbial attack. Has no oxalate oxidase activity. The protein is Nectarin-1 (NEC1) of Nicotiana plumbaginifolia (Leadwort-leaved tobacco).